Reading from the N-terminus, the 674-residue chain is DNA ligase (674 aa).

NAD(+) is bound by residues 34 to 38 (DFEFD), 83 to 84 (SL), and Glu117. Catalysis depends on Lys119, which acts as the N6-AMP-lysine intermediate. Arg140, Glu184, Lys297, and Lys321 together coordinate NAD(+). Positions 415, 418, 433, and 439 each coordinate Zn(2+). Residues 598–674 (LVNTNFEGQS…IDEDEFERML (77 aa)) form the BRCT domain.

It belongs to the NAD-dependent DNA ligase family. LigA subfamily. It depends on Mg(2+) as a cofactor. The cofactor is Mn(2+).

The catalysed reaction is NAD(+) + (deoxyribonucleotide)n-3'-hydroxyl + 5'-phospho-(deoxyribonucleotide)m = (deoxyribonucleotide)n+m + AMP + beta-nicotinamide D-nucleotide.. DNA ligase that catalyzes the formation of phosphodiester linkages between 5'-phosphoryl and 3'-hydroxyl groups in double-stranded DNA using NAD as a coenzyme and as the energy source for the reaction. It is essential for DNA replication and repair of damaged DNA. This is DNA ligase from Chlorobaculum parvum (strain DSM 263 / NCIMB 8327) (Chlorobium vibrioforme subsp. thiosulfatophilum).